A 499-amino-acid chain; its full sequence is Maturase K (499 aa).

It belongs to the intron maturase 2 family. MatK subfamily.

Its subcellular location is the plastid. It localises to the chloroplast. Functionally, usually encoded in the trnK tRNA gene intron. Probably assists in splicing its own and other chloroplast group II introns. This chain is Maturase K, found in Ceratozamia mexicana (Mexican horncone).